We begin with the raw amino-acid sequence, 379 residues long: Cytochrome b (379 aa).

Helical transmembrane passes span 33-53 (FGSLLGACLTIQIITGLFLAM), 77-98 (WTIRYLHANGASLFFLCLFIHV), 113-133 (WNIGIMLLFSVMATAFMGYVL), and 178-198 (FFALHFILPFIISALTMIHLL). Heme b is bound by residues His-83 and His-97. Residues His-182 and His-196 each contribute to the heme b site. His-201 contributes to the a ubiquinone binding site. 4 consecutive transmembrane segments (helical) span residues 226–246 (TKDFLGLLLLILLLMTLTLFY), 288–308 (LGGVVALIMSILILAIMPFLQ), 320–340 (LSQFLFWILVADLLTLTWIGG), and 347–367 (FINIGQMASILYFSLMVFIMP).

It belongs to the cytochrome b family. As to quaternary structure, the cytochrome bc1 complex contains 11 subunits: 3 respiratory subunits (MT-CYB, CYC1 and UQCRFS1), 2 core proteins (UQCRC1 and UQCRC2) and 6 low-molecular weight proteins (UQCRH/QCR6, UQCRB/QCR7, UQCRQ/QCR8, UQCR10/QCR9, UQCR11/QCR10 and a cleavage product of UQCRFS1). This cytochrome bc1 complex then forms a dimer. It depends on heme b as a cofactor.

It is found in the mitochondrion inner membrane. Functionally, component of the ubiquinol-cytochrome c reductase complex (complex III or cytochrome b-c1 complex) that is part of the mitochondrial respiratory chain. The b-c1 complex mediates electron transfer from ubiquinol to cytochrome c. Contributes to the generation of a proton gradient across the mitochondrial membrane that is then used for ATP synthesis. The chain is Cytochrome b (MT-CYB) from Lepilemur aeeclis (Sportive lemur).